Here is a 25-residue protein sequence, read N- to C-terminus: Neuromedin-U-25 (25 aa).

At N25 the chain carries Asparagine amide.

Belongs to the NmU family.

It is found in the secreted. Its function is as follows. Stimulates uterine smooth muscle contraction and causes selective vasoconstriction. The sequence is that of Neuromedin-U-25 from Rana temporaria (European common frog).